A 196-amino-acid polypeptide reads, in one-letter code: MAKGPRYKVPRRRRREGKTNYYKRYRMIVSGHPRFIVRKTLNYIWVQVATARPEGDVIIAAAHSNELRKRFGWKAGTCNTSAAYLTGLLAALRALEKGVEYAVPDIGLHRPVKGALVFAAIKAANDAGLKVPMGGEVAPSEERIRGEHIASYAKILRENGLLEKRFSRYLANGLQPEDLPSHFEEVKNKILEAYKR.

It belongs to the universal ribosomal protein uL18 family. As to quaternary structure, part of the 50S ribosomal subunit. Contacts the 5S and 23S rRNAs.

Its function is as follows. This is one of the proteins that bind and probably mediate the attachment of the 5S RNA into the large ribosomal subunit, where it forms part of the central protuberance. This chain is Large ribosomal subunit protein uL18, found in Desulfurococcus amylolyticus (strain DSM 18924 / JCM 16383 / VKM B-2413 / 1221n) (Desulfurococcus kamchatkensis).